Here is a 317-residue protein sequence, read N- to C-terminus: NAC domain-containing protein 55 (317 aa).

Residues 14–162 (LPPGFRFYPT…DWVLCRIYKK (149 aa)) form the NAC domain. A DNA-binding region spans residues 111–168 (VGIKKALVFYIGKAPKGTKTNWIMHEYRLIEPSRRNGSTKLDDWVLCRIYKKQTSAQK).

As to expression, expressed in leaves.

The protein resides in the nucleus. Transcription factors that bind specifically to the 5'-CATGTG-3' motif. The protein is NAC domain-containing protein 55 (NAC055) of Arabidopsis thaliana (Mouse-ear cress).